The chain runs to 85 residues: Conotoxin Mi15b (85 aa).

Positions 1 to 23 are cleaved as a signal peptide; the sequence is MEKLTVLILVAIVLLTIQVLGQS. Positions 24-49 are excised as a propeptide; it reads DRDKHPKRRPRQYATKRLSALMKGHR. Pyrrolidone carboxylic acid is present on Gln-50.

The protein belongs to the conotoxin O2 superfamily. Contains 4 disulfide bonds. Expressed by the venom duct.

The protein resides in the secreted. The chain is Conotoxin Mi15b from Conus miles (Soldier cone).